We begin with the raw amino-acid sequence, 340 residues long: Phosphoribosylformylglycinamidine cyclo-ligase (340 aa).

Belongs to the AIR synthase family.

It localises to the cytoplasm. It carries out the reaction 2-formamido-N(1)-(5-O-phospho-beta-D-ribosyl)acetamidine + ATP = 5-amino-1-(5-phospho-beta-D-ribosyl)imidazole + ADP + phosphate + H(+). The protein operates within purine metabolism; IMP biosynthesis via de novo pathway; 5-amino-1-(5-phospho-D-ribosyl)imidazole from N(2)-formyl-N(1)-(5-phospho-D-ribosyl)glycinamide: step 2/2. The sequence is that of Phosphoribosylformylglycinamidine cyclo-ligase from Streptococcus mutans serotype c (strain ATCC 700610 / UA159).